A 93-amino-acid chain; its full sequence is Small ribosomal subunit protein uS19 (93 aa).

The protein belongs to the universal ribosomal protein uS19 family.

Its function is as follows. Protein S19 forms a complex with S13 that binds strongly to the 16S ribosomal RNA. The protein is Small ribosomal subunit protein uS19 of Rhodococcus erythropolis (strain PR4 / NBRC 100887).